We begin with the raw amino-acid sequence, 302 residues long: Ribosomal RNA small subunit methyltransferase H (302 aa).

S-adenosyl-L-methionine is bound by residues 36–38, D56, F84, D99, and Q106; that span reads GGH.

It belongs to the methyltransferase superfamily. RsmH family.

The protein resides in the cytoplasm. It carries out the reaction cytidine(1402) in 16S rRNA + S-adenosyl-L-methionine = N(4)-methylcytidine(1402) in 16S rRNA + S-adenosyl-L-homocysteine + H(+). Specifically methylates the N4 position of cytidine in position 1402 (C1402) of 16S rRNA. In Flavobacterium johnsoniae (strain ATCC 17061 / DSM 2064 / JCM 8514 / BCRC 14874 / CCUG 350202 / NBRC 14942 / NCIMB 11054 / UW101) (Cytophaga johnsonae), this protein is Ribosomal RNA small subunit methyltransferase H.